Here is a 502-residue protein sequence, read N- to C-terminus: Probable cytochrome P450 6a23 (502 aa).

Cysteine 445 is a binding site for heme.

This sequence belongs to the cytochrome P450 family. The cofactor is heme.

It is found in the endoplasmic reticulum membrane. The protein resides in the microsome membrane. Functionally, may be involved in the metabolism of insect hormones and in the breakdown of synthetic insecticides. The sequence is that of Probable cytochrome P450 6a23 (Cyp6a23) from Drosophila melanogaster (Fruit fly).